We begin with the raw amino-acid sequence, 78 residues long: Large ribosomal subunit protein bL28 (78 aa).

The tract at residues 1-20 (MSRVCQVTGKGPVTGNNISH) is disordered.

The protein belongs to the bacterial ribosomal protein bL28 family.

The protein is Large ribosomal subunit protein bL28 of Azotobacter vinelandii (strain DJ / ATCC BAA-1303).